Consider the following 381-residue polypeptide: MKTLHFGAGNIGRGFIGKLLADASHQVTFADVNETLIDQLNHRQEYKVHVVGADQKLDVVRNVAAVSSAGHEVIARIITADLVTTAVGPNILDKIASTLAKGLQARFDAGNLSPLNVIACENMVRGTSHLKQEVLKYLPVAYHATHESCVGFVDSAVDRIVPPAAANDDPLEVTVESFSEWIVDQTQFKGELPQVAGMEPTDNLMAFVERKLFTLNTGHIVTAYLGKLRGYRTIREAIEDPVIRSKVRRAMEESGAVLVKRYGFDPRLHAAYIEKILARFANPYLVDEIDRVGRQPLRKLAAGDRLVKPLLGTLEYGLPSDHLQEGIAAALHYCNADDPQAVELQALLAELGPAQALARVTGLAADSDIVSAIVARYDSLK.

Thr3–Gly14 contacts NAD(+).

This sequence belongs to the mannitol dehydrogenase family.

It catalyses the reaction D-mannitol 1-phosphate + NAD(+) = beta-D-fructose 6-phosphate + NADH + H(+). This chain is Mannitol-1-phosphate 5-dehydrogenase, found in Aeromonas salmonicida (strain A449).